Here is a 309-residue protein sequence, read N- to C-terminus: Taste receptor type 2 member 20 (309 aa).

Residues 1-6 (MMSFLH) are Extracellular-facing. A helical membrane pass occupies residues 7–27 (IVFSILVVVAFILGNFANGFI). The Cytoplasmic segment spans residues 28–46 (ALINFIAWVKRQKISSADQ). The chain crosses the membrane as a helical span at residues 47–67 (IIAALAVSRVGLLWVILLHWY). Residues 68-79 (STVLNPTSSNLK) lie on the Extracellular side of the membrane. The helical transmembrane segment at 80-100 (VTIFISNAWAVTNHFSIWLAA) threads the bilayer. Topologically, residues 101 to 125 (SLSIFYLLKIVNFSRLIFHHLKRKA) are cytoplasmic. Residues 126–146 (KSVVLVIVLGSLFFLVCHLVM) traverse the membrane as a helical segment. Over 147 to 178 (KSTYINVWTEEYEGNVTWKIKLRNAMHLSNLT) the chain is Extracellular. 2 N-linked (GlcNAc...) asparagine glycosylation sites follow: asparagine 161 and asparagine 176. Residues 179-199 (VAMLANLIPFTLTLISFLLLI) form a helical membrane-spanning segment. At 200–229 (YSLCKHLKKMQLHGKGSQDPSTKIHIKALQ) the chain is on the cytoplasmic side. The helical transmembrane segment at 230–250 (TVTSFLILLAIYFLCLITSFW) threads the bilayer. At 251–259 (NSKMRPKEI) the chain is on the extracellular side. Residues 260 to 280 (VLMLCQAFGIIYPSFHSFILI) form a helical membrane-spanning segment. The Cytoplasmic portion of the chain corresponds to 281–309 (WGNKTLKQTFLSVLWRVTCWAKGQNQSTP).

This sequence belongs to the G-protein coupled receptor T2R family.

It is found in the membrane. In terms of biological role, receptor that may play a role in the perception of bitterness and is gustducin-linked. May play a role in sensing the chemical composition of the gastrointestinal content. The activity of this receptor may stimulate alpha gustducin, mediate PLC-beta-2 activation and lead to the gating of TRPM5. This Gorilla gorilla gorilla (Western lowland gorilla) protein is Taste receptor type 2 member 20 (TAS2R20).